The following is a 953-amino-acid chain: Catenin alpha-2 (953 aa).

Phosphothreonine is present on Thr632. Phosphoserine occurs at positions 640, 651, and 901. Over residues 912–927 (EKKPLVKREKPEEFQT) the composition is skewed to basic and acidic residues. Positions 912–939 (EKKPLVKREKPEEFQTRVRRGSQKKHIS) are disordered. Residues 928–938 (RVRRGSQKKHI) are compositionally biased toward basic residues. Ser939 is modified (phosphoserine).

Belongs to the vinculin/alpha-catenin family. As to quaternary structure, interacts with CDH1 and CDH2. Interacts with ZNF639; recruits CTNNA2 to the nucleus. Interacts with F-actin. As to expression, expressed almost exclusively in the nervous system.

It is found in the cell membrane. The protein localises to the cytoplasm. The protein resides in the cytoskeleton. Its subcellular location is the cell junction. It localises to the adherens junction. It is found in the cell projection. The protein localises to the axon. The protein resides in the nucleus. In terms of biological role, may function as a linker between cadherin adhesion receptors and the cytoskeleton to regulate cell-cell adhesion and differentiation in the nervous system. Required for proper regulation of cortical neuronal migration and neurite growth. It acts as a negative regulator of Arp2/3 complex activity and Arp2/3-mediated actin polymerization. It thereby suppresses excessive actin branching which would impair neurite growth and stability. Regulates morphological plasticity of synapses and cerebellar and hippocampal lamination during development. Functions in the control of startle modulation. This chain is Catenin alpha-2 (Ctnna2), found in Mus musculus (Mouse).